The following is a 345-amino-acid chain: Krueppel-like factor 3 (345 aa).

Residues 1–74 (MLMFDPVPVK…TVNKRSSPPS (74 aa)) are repressor domain. A Glycyl lysine isopeptide (Lys-Gly) (interchain with G-Cter in SUMO) cross-link involves residue Lys-10. The 9aaTAD; inactive signature appears at 60–68 (EPVDLTVNK). The CTBP-binding motif motif lies at 61-65 (PVDLT). The disordered stretch occupies residues 66–112 (VNKRSSPPSAGNSPSSLKFPSSHRRASPGLSMPSSSPPIKKYSPPSP). Lys-68 is covalently cross-linked (Glycyl lysine isopeptide (Lys-Gly) (interchain with G-Cter in SUMO2)). Composition is skewed to low complexity over residues 70–81 (SSPPSAGNSPSS) and 92–108 (SPGL…KKYS). Residues Ser-71, Ser-92, Ser-101, Ser-108, and Ser-111 each carry the phosphoserine modification. Residues Lys-196 and Lys-198 each participate in a glycyl lysine isopeptide (Lys-Gly) (interchain with G-Cter in SUMO2) cross-link. Phosphoserine occurs at positions 216, 224, and 250. 3 C2H2-type zinc fingers span residues 260 to 284 (HRCD…RRTH), 290 to 314 (YKCT…FRKH), and 320 to 342 (FQCP…RKRH).

It belongs to the krueppel C2H2-type zinc-finger protein family. In terms of assembly, monomer. In terms of processing, sumoylated with SUMO1. Sumoylation is enhanced by PIAS1, PIAS2alpha and PIAS2beta, and PIAS4, but not by Pc2. Enhances transcriptional repression, but has no effect on DNA binding. Sumoylation on Lys-198 is the major site.

It localises to the nucleus. Its function is as follows. Binds to the CACCC box of erythroid cell-expressed genes. May play a role in hematopoiesis. The polypeptide is Krueppel-like factor 3 (KLF3) (Homo sapiens (Human)).